Reading from the N-terminus, the 874-residue chain is Alanine--tRNA ligase (874 aa).

Zn(2+)-binding residues include His563, His567, Cys665, and His669.

Belongs to the class-II aminoacyl-tRNA synthetase family. The cofactor is Zn(2+).

It localises to the cytoplasm. The enzyme catalyses tRNA(Ala) + L-alanine + ATP = L-alanyl-tRNA(Ala) + AMP + diphosphate. Its function is as follows. Catalyzes the attachment of alanine to tRNA(Ala) in a two-step reaction: alanine is first activated by ATP to form Ala-AMP and then transferred to the acceptor end of tRNA(Ala). Also edits incorrectly charged Ser-tRNA(Ala) and Gly-tRNA(Ala) via its editing domain. This Haemophilus ducreyi (strain 35000HP / ATCC 700724) protein is Alanine--tRNA ligase.